Reading from the N-terminus, the 564-residue chain is Arginine--tRNA ligase (564 aa).

Positions 122–132 (PNIAKPFSIGH) match the 'HIGH' region motif.

Belongs to the class-I aminoacyl-tRNA synthetase family. In terms of assembly, monomer.

It localises to the cytoplasm. It catalyses the reaction tRNA(Arg) + L-arginine + ATP = L-arginyl-tRNA(Arg) + AMP + diphosphate. In Lactococcus lactis subsp. lactis (strain IL1403) (Streptococcus lactis), this protein is Arginine--tRNA ligase.